We begin with the raw amino-acid sequence, 469 residues long: Uronate isomerase (469 aa).

It belongs to the metallo-dependent hydrolases superfamily. Uronate isomerase family.

It catalyses the reaction D-glucuronate = D-fructuronate. The enzyme catalyses aldehydo-D-galacturonate = keto-D-tagaturonate. Its pathway is carbohydrate metabolism; pentose and glucuronate interconversion. This chain is Uronate isomerase, found in Pectobacterium carotovorum subsp. carotovorum (strain PC1).